The sequence spans 159 residues: Small ribosomal subunit protein uS17 (159 aa).

This sequence belongs to the universal ribosomal protein uS17 family.

The protein is Small ribosomal subunit protein uS17 (RPS11) of Euphorbia esula (Leafy spurge).